The following is a 199-amino-acid chain: Inner membrane protein E199L (199 aa).

N-linked (GlcNAc...) asparagine; by host glycosylation occurs at asparagine 131. Residues isoleucine 150–isoleucine 170 traverse the membrane as a helical segment.

The protein belongs to the asfivirus E199L family. Interacts with host PYCR2; this interaction results in autophagy activation.

It is found in the virion membrane. The protein resides in the host membrane. Functionally, essential for viral fusion with host endosomal membrane and core release. Not required for virus morphogenesis and egress. Induces complete autophagy through the interaction with and down-regulation of host PYCR2. The sequence is that of Inner membrane protein E199L from African swine fever virus (isolate Pig/Kenya/KEN-50/1950) (ASFV).